The following is a 65-amino-acid chain: uncharacterized protein (65 aa).

Positions 1 to 16 are cleaved as a signal peptide; that stretch reads MMHVCSLLVSFDVVKS.

This is an uncharacterized protein from Saccharomyces cerevisiae (strain ATCC 204508 / S288c) (Baker's yeast).